A 654-amino-acid chain; its full sequence is uncharacterized protein (654 aa).

The segment covering 1–13 (MSNLILTPSNNGT) has biased composition (polar residues). The segment at 1–23 (MSNLILTPSNNGTERPYRSRKTR) is disordered. Residues 25-54 (CDNCRLRKSRCVVESIGNPCLLCTQLKIPC) constitute a DNA-binding region (zn(2)-C6 fungal-type). The interval 63-96 (RNKQKKQQDSVSDDTPSEATTTTNDDRDPKYNAL) is disordered.

The protein localises to the cytoplasm. It is found in the nucleus. This is an uncharacterized protein from Schizosaccharomyces pombe (strain 972 / ATCC 24843) (Fission yeast).